The primary structure comprises 126 residues: Holo-[acyl-carrier-protein] synthase (126 aa).

Residues Asp-9 and Glu-58 each coordinate Mg(2+).

The protein belongs to the P-Pant transferase superfamily. AcpS family. Mg(2+) serves as cofactor.

Its subcellular location is the cytoplasm. It catalyses the reaction apo-[ACP] + CoA = holo-[ACP] + adenosine 3',5'-bisphosphate + H(+). Functionally, transfers the 4'-phosphopantetheine moiety from coenzyme A to a Ser of acyl-carrier-protein. The sequence is that of Holo-[acyl-carrier-protein] synthase from Escherichia coli O17:K52:H18 (strain UMN026 / ExPEC).